We begin with the raw amino-acid sequence, 224 residues long: Ribosome maturation factor RimM (224 aa).

Residues 1 to 12 (MARRPGSSSRGP) are compositionally biased toward low complexity. Disordered regions lie at residues 1-46 (MARR…PSLV) and 204-224 (VADP…DDPG). One can recognise a PRC barrel domain in the interval 137 to 211 (EDEFFLTDLI…KVVADPPEDL (75 aa)).

Belongs to the RimM family. As to quaternary structure, binds ribosomal protein uS19.

It is found in the cytoplasm. Its function is as follows. An accessory protein needed during the final step in the assembly of 30S ribosomal subunit, possibly for assembly of the head region. Essential for efficient processing of 16S rRNA. May be needed both before and after RbfA during the maturation of 16S rRNA. It has affinity for free ribosomal 30S subunits but not for 70S ribosomes. The polypeptide is Ribosome maturation factor RimM (Methylorubrum populi (strain ATCC BAA-705 / NCIMB 13946 / BJ001) (Methylobacterium populi)).